The sequence spans 868 residues: Phospholipase D delta (868 aa).

One can recognise a C2 domain in the interval 1–154 (MAEKVSEDVM…ASGERISGWF (154 aa)). Asp-216 provides a ligand contact to Ca(2+). Residues 368 to 403 (TLFTHHQKCVLVDTQAVGNNRKVTAFIGGLDLCDGR) enclose the PLD phosphodiesterase 1 domain. Catalysis depends on residues His-373, Lys-375, and Asp-380. Residue His-373 coordinates a 1,2-diacyl-sn-glycero-3-phosphate. Ca(2+) is bound by residues His-409 and His-440. A 1,2-diacyl-sn-glycero-3-phosphate contacts are provided by Gln-588 and His-718. A PLD phosphodiesterase 2 domain is found at 713–740 (FMIYVHAKGMIVDDEYVLMGSANINQRS). Residues His-718, Lys-720, and Asp-725 contribute to the active site. Residue Glu-781 coordinates Ca(2+).

The protein belongs to the phospholipase D family. C2-PLD subfamily. In terms of assembly, interacts with GAPC1 and GAPC2. Increased interaction in the presence of H(2)O(2). Ca(2+) is required as a cofactor. Expressed in roots, leaves, stems, siliques and flowers. Strongly expressed in the vascular tissues of cotyledons and leaves under dehydration stress conditions. Expression is higher in old leaves than in young leaves. Expressed in leaves and guard cells. The isoform 2 may not be present in siliques.

It is found in the cell membrane. It catalyses the reaction a 1,2-diacyl-sn-glycero-3-phosphocholine + H2O = a 1,2-diacyl-sn-glycero-3-phosphate + choline + H(+). Its activity is regulated as follows. Activated by free oleic acid in a dose-dependent manner and less effectively by other unsaturated fatty acids such as linoleic and linolenic acids. Not activated by the saturated fatty acids stearic and palmitic acids. PIP2 and Ca(2+) stimulate activity by promoting lipid substrate binding to the active site. Activated by H(2)O(2) and by binding to GAPC. In terms of biological role, hydrolyzes glycerol-phospholipids at the terminal phosphodiesteric bond to generate phosphatidic acids (PA). May be involved in PA accumulation in the dehydration stress response and in the transduction of hormonal and environmental signals to the microtubules cytoskeleton. Prefers phosphatidylethanolamine to phosphatidylcholine as substrate. Involved in H(2)O(2) and abscisic acid (ABA)-induced stomatal closure. Involved in nitric oxide (NO) signaling during stomatal closure. Plays a positive role in ABA-promoted senescence. Involved in basal defense and nonhost resistance. The chain is Phospholipase D delta from Arabidopsis thaliana (Mouse-ear cress).